We begin with the raw amino-acid sequence, 901 residues long: HTH-type transcriptional regulator MalT (901 aa).

39–46 provides a ligand contact to ATP; that stretch reads SPAGYGKT. The 66-residue stretch at 829–894 folds into the HTH luxR-type domain; that stretch reads ELIRTSPLTQ…AAVQHAQKLL (66 aa). Positions 853–872 form a DNA-binding region, H-T-H motif; that stretch reads NEQIAGELEVAATTIKTHIR.

Belongs to the MalT family. As to quaternary structure, monomer in solution. Oligomerizes to an active state in the presence of the positive effectors ATP and maltotriose.

Activated by ATP and maltotriose, which are both required for DNA binding. In terms of biological role, positively regulates the transcription of the maltose regulon whose gene products are responsible for uptake and catabolism of malto-oligosaccharides. Specifically binds to the promoter region of its target genes, recognizing a short DNA motif called the MalT box. This is HTH-type transcriptional regulator MalT from Escherichia coli O6:H1 (strain CFT073 / ATCC 700928 / UPEC).